The chain runs to 189 residues: Dirigent protein 21 (189 aa).

A signal peptide spans 1–19; sequence MASLYLLLLLPLFLALILA. Residues Asn-72 and Asn-173 are each glycosylated (N-linked (GlcNAc...) asparagine).

It belongs to the plant dirigent protein family. As to quaternary structure, homodimer.

The protein resides in the secreted. Functionally, dirigent proteins impart stereoselectivity on the phenoxy radical-coupling reaction, yielding optically active lignans from two molecules of coniferyl alcohol in the biosynthesis of lignans, flavonolignans, and alkaloids and thus plays a central role in plant secondary metabolism. The sequence is that of Dirigent protein 21 (DIR21) from Arabidopsis thaliana (Mouse-ear cress).